We begin with the raw amino-acid sequence, 188 residues long: V-type ATP synthase subunit E (188 aa).

The protein belongs to the V-ATPase E subunit family.

In terms of biological role, produces ATP from ADP in the presence of a proton gradient across the membrane. In Thermus thermophilus (strain ATCC BAA-163 / DSM 7039 / HB27), this protein is V-type ATP synthase subunit E.